A 434-amino-acid chain; its full sequence is Protein maelstrom homolog (434 aa).

The HMG box DNA-binding region spans 4–73 (RKASRNAYYF…AQGKDSGPSE (70 aa)). Disordered regions lie at residues 62 to 94 (RAAQ…KQNV) and 357 to 385 (SHFN…SGQN). Residues 357–371 (SHFNSANQEQRSNTP) show a composition bias toward polar residues.

This sequence belongs to the maelstrom family. Interacts with SMARCB1, SIN3B and DDX4. Interacts with piRNA-associated proteins TDRD1, PIWIL1 and PIWIL2. Interacts with TEX19.

It is found in the cytoplasm. Its subcellular location is the nucleus. Plays a central role during spermatogenesis by repressing transposable elements and preventing their mobilization, which is essential for the germline integrity. Acts via the piRNA metabolic process, which mediates the repression of transposable elements during meiosis by forming complexes composed of piRNAs and Piwi proteins and governs the methylation and subsequent repression of transposons. Its association with piP-bodies suggests a participation in the secondary piRNAs metabolic process. Required for the localization of germ-cell factors to the meiotic nuage. The polypeptide is Protein maelstrom homolog (MAEL) (Macaca fascicularis (Crab-eating macaque)).